Here is a 156-residue protein sequence, read N- to C-terminus: SsrA-binding protein (156 aa).

Belongs to the SmpB family.

It is found in the cytoplasm. Required for rescue of stalled ribosomes mediated by trans-translation. Binds to transfer-messenger RNA (tmRNA), required for stable association of tmRNA with ribosomes. tmRNA and SmpB together mimic tRNA shape, replacing the anticodon stem-loop with SmpB. tmRNA is encoded by the ssrA gene; the 2 termini fold to resemble tRNA(Ala) and it encodes a 'tag peptide', a short internal open reading frame. During trans-translation Ala-aminoacylated tmRNA acts like a tRNA, entering the A-site of stalled ribosomes, displacing the stalled mRNA. The ribosome then switches to translate the ORF on the tmRNA; the nascent peptide is terminated with the 'tag peptide' encoded by the tmRNA and targeted for degradation. The ribosome is freed to recommence translation, which seems to be the essential function of trans-translation. This is SsrA-binding protein from Bacillus velezensis (strain DSM 23117 / BGSC 10A6 / LMG 26770 / FZB42) (Bacillus amyloliquefaciens subsp. plantarum).